A 798-amino-acid chain; its full sequence is Cold shock domain-containing protein E1 (798 aa).

Met-1 is modified (N-acetylmethionine). The CSD 1 domain maps to 26–87 (ETGVIEKLLT…RTGKPIAVKL (62 aa)). N6-acetyllysine is present on Lys-81. Lys-91 is covalently cross-linked (Glycyl lysine isopeptide (Lys-Gly) (interchain with G-Cter in SUMO2)). Phosphoserine is present on Ser-123. The CSD 2; truncated domain occupies 136–179 (VFYLTYTPEDVEGNVQLETGDKINFVIDNNKHTGAVSARNIMLL). Residues 186 to 245 (CQGVVCAMKEAFGFIERGDVVKEIFFHYSEFKGDLETLQPGDDVEFTIKDRNGKEVATDV) form the CSD 3 domain. At Ser-276 the chain carries Phosphoserine. Residues 297–337 (LPFGDKDTKSKVTLLEGDHVRFNISTDRRDKLERATNIEVL) form the CSD 4; truncated domain. CSD domains lie at 349 to 410 (EMGV…AIRI) and 447 to 507 (NKGK…ATCV). Ser-514 carries the phosphoserine modification. The CSD 7 domain occupies 519–579 (LLGYVATLKD…KGNKVSAEKV (61 aa)). Phosphoserine is present on Ser-584. CSD domains are found at residues 610–670 (PTQT…AYNI) and 674–735 (RRAT…ACNV). One can recognise an SUZ-C domain in the interval 748-789 (PRPDRLVNRLKNITLDDASAPRLMVLRQPRGPDNSMGFGAER). The residue at position 761 (Thr-761) is a Phosphothreonine.

It belongs to the UNR family. In terms of assembly, component of a multi subunit autoregulatory ribonucleoprotein complex (ARC), at least composed of IGF2BP1, PABPC1 and CSDE1. Interacts with STRAP. Part of a complex associated with the FOS mCRD domain and consisting of PABPC1, PAIP1, HNRPD and SYNCRIP. The interaction with PABPC1 is direct and RNA-independent. Interacts with EIF4ENIF1/4E-T.

Its subcellular location is the cytoplasm. The protein localises to the stress granule. The protein resides in the P-body. Its function is as follows. RNA-binding protein involved in translationally coupled mRNA turnover. Implicated with other RNA-binding proteins in the cytoplasmic deadenylation/translational and decay interplay of the FOS mRNA mediated by the major coding-region determinant of instability (mCRD) domain. Required for efficient formation of stress granules. Functionally, (Microbial infection) Required for internal initiation of translation of human rhinovirus RNA. In Homo sapiens (Human), this protein is Cold shock domain-containing protein E1.